The chain runs to 164 residues: SVILDTKGEPVSNAADAYYLVPVSHGEGGLALAKVGNEAEPKAVVLDPHHRPGLTVRFETPLAIAIITESFFLNIKFVPSSSDSEVWDVSKQYPIGLAVKVTDTKSFVGPFRVEKEGEGYKIVYYPDRGQTGLDIGLVHRNDKYYLAATEGEPFVFKIRKATYE.

This sequence belongs to the protease inhibitor I3 (leguminous Kunitz-type inhibitor) family.

It localises to the secreted. Its function is as follows. Inhibits T.cruzi cruzipain. The chain is Kunitz-type proteinase inhibitor BbCI from Bauhinia bauhinioides (Perlebia bauhinoides).